A 363-amino-acid polypeptide reads, in one-letter code: Dihydroorotate dehydrogenase (quinone) (363 aa).

FMN contacts are provided by residues 62-66 (AGFDK) and Thr86. Lys66 lines the substrate pocket. A substrate-binding site is contributed by 111–115 (NRMGF). Asn142 and Asn175 together coordinate FMN. Asn175 contributes to the substrate binding site. Residue Ser178 is the Nucleophile of the active site. Asn180 is a binding site for substrate. Positions 216 and 244 each coordinate FMN. 245–246 (NT) contributes to the substrate binding site. FMN contacts are provided by residues Gly267, Gly296, and 317 to 318 (YT).

The protein belongs to the dihydroorotate dehydrogenase family. Type 2 subfamily. In terms of assembly, monomer. FMN is required as a cofactor.

It localises to the cell membrane. It catalyses the reaction (S)-dihydroorotate + a quinone = orotate + a quinol. It functions in the pathway pyrimidine metabolism; UMP biosynthesis via de novo pathway; orotate from (S)-dihydroorotate (quinone route): step 1/1. Catalyzes the conversion of dihydroorotate to orotate with quinone as electron acceptor. The sequence is that of Dihydroorotate dehydrogenase (quinone) from Anaeromyxobacter sp. (strain Fw109-5).